We begin with the raw amino-acid sequence, 71 residues long: High-potential iron-sulfur protein isozyme 2 (71 aa).

Residues C34, C37, C51, and C65 each coordinate [4Fe-4S] cluster.

This sequence belongs to the high-potential iron-sulfur protein (HiPIP) family. In terms of assembly, homodimer.

Specific class of high-redox-potential 4Fe-4S ferredoxins. Functions in anaerobic electron transport in most purple and in some other photosynthetic bacteria and in at least one genus (Paracoccus) of halophilic, denitrifying bacteria. The chain is High-potential iron-sulfur protein isozyme 2 (hip2) from Ectothiorhodospira shaposhnikovii (Ectothiorhodospira vacuolata).